We begin with the raw amino-acid sequence, 534 residues long: Arginine--tRNA ligase (534 aa).

A 'HIGH' region motif is present at residues 120-130 (ANPTGFLHLGH).

This sequence belongs to the class-I aminoacyl-tRNA synthetase family. Monomer.

The protein localises to the cytoplasm. It carries out the reaction tRNA(Arg) + L-arginine + ATP = L-arginyl-tRNA(Arg) + AMP + diphosphate. In Mesomycoplasma hyopneumoniae (strain J / ATCC 25934 / NCTC 10110) (Mycoplasma hyopneumoniae), this protein is Arginine--tRNA ligase.